The sequence spans 127 residues: Glycine cleavage system H protein 1 (127 aa).

The Lipoyl-binding domain maps to 20-101 (SVTVGITPYA…LGAGWFFRFI (82 aa)). N6-lipoyllysine is present on lysine 60.

It belongs to the GcvH family. The glycine cleavage system is composed of four proteins: P, T, L and H. It depends on (R)-lipoate as a cofactor.

Functionally, the glycine cleavage system catalyzes the degradation of glycine. The H protein shuttles the methylamine group of glycine from the P protein to the T protein. This chain is Glycine cleavage system H protein 1, found in Pseudomonas syringae pv. tomato (strain ATCC BAA-871 / DC3000).